A 412-amino-acid chain; its full sequence is DNA polymerase IV (412 aa).

Residues 12–193 enclose the UmuC domain; sequence ILHVDMNCFF…LPVGAMHGIG (182 aa). Positions 16 and 112 each coordinate Mg(2+). Glutamate 113 is an active-site residue. A disordered region spans residues 235–257; it reads KGMDDREVDPSQMGQHKSVGNSM. The segment covering 246–257 has biased composition (polar residues); sequence QMGQHKSVGNSM.

Belongs to the DNA polymerase type-Y family. As to quaternary structure, monomer. The cofactor is Mg(2+).

Its subcellular location is the cytoplasm. The catalysed reaction is DNA(n) + a 2'-deoxyribonucleoside 5'-triphosphate = DNA(n+1) + diphosphate. Functionally, poorly processive, error-prone DNA polymerase involved in untargeted mutagenesis. Copies undamaged DNA at stalled replication forks, which arise in vivo from mismatched or misaligned primer ends. These misaligned primers can be extended by PolIV. Exhibits no 3'-5' exonuclease (proofreading) activity. May be involved in translesional synthesis, in conjunction with the beta clamp from PolIII. The polypeptide is DNA polymerase IV (Bacillus anthracis).